The sequence spans 168 residues: Peptide deformylase 2 (168 aa).

Positions 91 and 133 each coordinate Fe cation. E134 is an active-site residue. Residue H137 coordinates Fe cation.

It belongs to the polypeptide deformylase family. It depends on Fe(2+) as a cofactor.

The catalysed reaction is N-terminal N-formyl-L-methionyl-[peptide] + H2O = N-terminal L-methionyl-[peptide] + formate. Removes the formyl group from the N-terminal Met of newly synthesized proteins. Requires at least a dipeptide for an efficient rate of reaction. N-terminal L-methionine is a prerequisite for activity but the enzyme has broad specificity at other positions. This is Peptide deformylase 2 from Vibrio cholerae serotype O1 (strain ATCC 39315 / El Tor Inaba N16961).